Consider the following 432-residue polypeptide: Tol-Pal system protein TolB (432 aa).

A signal peptide spans M1–A21.

The protein belongs to the TolB family. As to quaternary structure, the Tol-Pal system is composed of five core proteins: the inner membrane proteins TolA, TolQ and TolR, the periplasmic protein TolB and the outer membrane protein Pal. They form a network linking the inner and outer membranes and the peptidoglycan layer.

Its subcellular location is the periplasm. Functionally, part of the Tol-Pal system, which plays a role in outer membrane invagination during cell division and is important for maintaining outer membrane integrity. In Hydrogenovibrio crunogenus (strain DSM 25203 / XCL-2) (Thiomicrospira crunogena), this protein is Tol-Pal system protein TolB.